The primary structure comprises 170 residues: Ribosome maturation factor RimM (170 aa).

Positions Pro-98 to Phe-170 constitute a PRC barrel domain.

The protein belongs to the RimM family. In terms of assembly, binds ribosomal protein uS19.

Its subcellular location is the cytoplasm. In terms of biological role, an accessory protein needed during the final step in the assembly of 30S ribosomal subunit, possibly for assembly of the head region. Essential for efficient processing of 16S rRNA. May be needed both before and after RbfA during the maturation of 16S rRNA. It has affinity for free ribosomal 30S subunits but not for 70S ribosomes. The protein is Ribosome maturation factor RimM of Xanthomonas oryzae pv. oryzae (strain MAFF 311018).